The primary structure comprises 135 residues: Ribosome-binding factor A (135 aa).

Belongs to the RbfA family. As to quaternary structure, monomer. Binds 30S ribosomal subunits, but not 50S ribosomal subunits or 70S ribosomes.

It is found in the cytoplasm. Functionally, one of several proteins that assist in the late maturation steps of the functional core of the 30S ribosomal subunit. Associates with free 30S ribosomal subunits (but not with 30S subunits that are part of 70S ribosomes or polysomes). Required for efficient processing of 16S rRNA. May interact with the 5'-terminal helix region of 16S rRNA. The polypeptide is Ribosome-binding factor A (Hyphomonas neptunium (strain ATCC 15444)).